The sequence spans 258 residues: Acetylglutamate kinase (258 aa).

Residues 44 to 45, R66, and N158 contribute to the substrate site; that span reads GG. ATP is bound by residues 181-186 and 209-211; these read DVSGIL and IIT.

The protein belongs to the acetylglutamate kinase family. ArgB subfamily. In terms of assembly, homodimer.

It is found in the cytoplasm. It carries out the reaction N-acetyl-L-glutamate + ATP = N-acetyl-L-glutamyl 5-phosphate + ADP. The protein operates within amino-acid biosynthesis; L-arginine biosynthesis; N(2)-acetyl-L-ornithine from L-glutamate: step 2/4. In terms of biological role, catalyzes the ATP-dependent phosphorylation of N-acetyl-L-glutamate. This chain is Acetylglutamate kinase, found in Shigella sonnei (strain Ss046).